A 480-amino-acid polypeptide reads, in one-letter code: Histone-lysine N-methyltransferase ASHR1 (480 aa).

An SET domain is found at 11-248 (RCLGVSNLPQ…KDSEITISYI (238 aa)). Residues Cys56, Cys59, Cys68, Cys71, Cys77, Cys81, His89, and Cys93 each coordinate Zn(2+). The MYND-type zinc-finger motif lies at 56 to 93 (CDGCFKTNNLKKCSACQVVWYCGSSCQKSEWKLHRDEC).

This sequence belongs to the class V-like SAM-binding methyltransferase superfamily. Histone-lysine methyltransferase family. SET2 subfamily.

Its subcellular location is the nucleus. It is found in the chromosome. The catalysed reaction is L-lysyl-[histone] + S-adenosyl-L-methionine = N(6)-methyl-L-lysyl-[histone] + S-adenosyl-L-homocysteine + H(+). Its function is as follows. Histone methyltransferase. The protein is Histone-lysine N-methyltransferase ASHR1 (ASHR1) of Arabidopsis thaliana (Mouse-ear cress).